Consider the following 92-residue polypeptide: Cell division protein FtsB (92 aa).

The Cytoplasmic portion of the chain corresponds to 1 to 3; the sequence is MRL. Residues 4–21 traverse the membrane as a helical segment; the sequence is FIFLLVAVLLLFQYDFWF. At 22–92 the chain is on the periplasmic side; the sequence is GKNGYLDYKR…IFYHIVKEQK (71 aa). Residues 26 to 74 adopt a coiled-coil conformation; sequence YLDYKRTAQQIAQHKQENEKLSQRNQVVAAEIKDLKQGVEAIEERARFQ.

It belongs to the FtsB family. Part of a complex composed of FtsB, FtsL and FtsQ.

Its subcellular location is the cell inner membrane. In terms of biological role, essential cell division protein. May link together the upstream cell division proteins, which are predominantly cytoplasmic, with the downstream cell division proteins, which are predominantly periplasmic. The chain is Cell division protein FtsB from Pasteurella multocida (strain Pm70).